Here is a 189-residue protein sequence, read N- to C-terminus: Acireductone dioxygenase 1 (189 aa).

Histidine 102, histidine 104, glutamate 108, and histidine 146 together coordinate Fe(2+). Ni(2+) contacts are provided by histidine 102, histidine 104, glutamate 108, and histidine 146.

It belongs to the acireductone dioxygenase (ARD) family. Monomer. Fe(2+) serves as cofactor. The cofactor is Ni(2+).

The enzyme catalyses 1,2-dihydroxy-5-(methylsulfanyl)pent-1-en-3-one + O2 = 3-(methylsulfanyl)propanoate + CO + formate + 2 H(+). The catalysed reaction is 1,2-dihydroxy-5-(methylsulfanyl)pent-1-en-3-one + O2 = 4-methylsulfanyl-2-oxobutanoate + formate + 2 H(+). It functions in the pathway amino-acid biosynthesis; L-methionine biosynthesis via salvage pathway; L-methionine from S-methyl-5-thio-alpha-D-ribose 1-phosphate: step 5/6. Catalyzes 2 different reactions between oxygen and the acireductone 1,2-dihydroxy-3-keto-5-methylthiopentene (DHK-MTPene) depending upon the metal bound in the active site. Fe-containing acireductone dioxygenase (Fe-ARD) produces formate and 2-keto-4-methylthiobutyrate (KMTB), the alpha-ketoacid precursor of methionine in the methionine recycle pathway. Ni-containing acireductone dioxygenase (Ni-ARD) produces methylthiopropionate, carbon monoxide and formate, and does not lie on the methionine recycle pathway. The polypeptide is Acireductone dioxygenase 1 (Nocardia farcinica (strain IFM 10152)).